Consider the following 266-residue polypeptide: Undecaprenyl-diphosphatase (266 aa).

A run of 8 helical transmembrane segments spans residues Met1–Ile21, Gln39–Phe59, Trp87–Ile107, Leu111–Ala131, Ala149–Ala169, Ala183–Val203, Ala218–Leu238, and Met246–Leu266.

Belongs to the UppP family.

It is found in the cell inner membrane. The enzyme catalyses di-trans,octa-cis-undecaprenyl diphosphate + H2O = di-trans,octa-cis-undecaprenyl phosphate + phosphate + H(+). In terms of biological role, catalyzes the dephosphorylation of undecaprenyl diphosphate (UPP). Confers resistance to bacitracin. The polypeptide is Undecaprenyl-diphosphatase (Shewanella sp. (strain MR-4)).